Consider the following 63-residue polypeptide: Large ribosomal subunit protein uL29 (63 aa).

Belongs to the universal ribosomal protein uL29 family.

This is Large ribosomal subunit protein uL29 from Bordetella pertussis (strain Tohama I / ATCC BAA-589 / NCTC 13251).